Consider the following 747-residue polypeptide: Ion-translocating oxidoreductase complex subunit C (747 aa).

4Fe-4S ferredoxin-type domains lie at 368–397 (MEPVAEEQSCIRCSQCADACPAGLLPQQLY) and 407–436 (KARNHHLFDCIECGACAYVCPSNIPLVQYY). C377, C380, C383, C387, C416, C419, C422, and C426 together coordinate [4Fe-4S] cluster. Residues 538 to 564 (VREERARENQTQQETPTVDVPSTELDD) are disordered.

This sequence belongs to the 4Fe4S bacterial-type ferredoxin family. RnfC subfamily. In terms of assembly, the complex is composed of six subunits: RnfA, RnfB, RnfC, RnfD, RnfE and RnfG. Requires [4Fe-4S] cluster as cofactor.

The protein resides in the cell inner membrane. In terms of biological role, part of a membrane-bound complex that couples electron transfer with translocation of ions across the membrane. This chain is Ion-translocating oxidoreductase complex subunit C, found in Pectobacterium carotovorum subsp. carotovorum (strain PC1).